A 190-amino-acid chain; its full sequence is Lipid A acyltransferase PagP (190 aa).

Positions 1 to 24 (MNRYLLTTLSAPLLALFFSFSLQA) are cleaved as a signal peptide. Active-site residues include His-62, Asp-105, and Ser-106.

This sequence belongs to the lipid A palmitoyltransferase family. As to quaternary structure, homodimer.

Its subcellular location is the cell outer membrane. The catalysed reaction is a lipid A + a 1,2-diacyl-sn-glycero-3-phosphocholine = a hepta-acyl lipid A + a 2-acyl-sn-glycero-3-phosphocholine. It carries out the reaction a lipid IVA + a 1,2-diacyl-sn-glycero-3-phosphocholine = a lipid IVB + a 2-acyl-sn-glycero-3-phosphocholine. It catalyses the reaction a lipid IIA + a 1,2-diacyl-sn-glycero-3-phosphocholine = a lipid IIB + a 2-acyl-sn-glycero-3-phosphocholine. Its function is as follows. Transfers a fatty acid residue from the sn-1 position of a phospholipid to the N-linked hydroxyfatty acid chain on the proximal unit of lipid A or its precursors. In Pantoea ananatis (strain LMG 20103), this protein is Lipid A acyltransferase PagP.